Consider the following 372-residue polypeptide: 12-oxophytodienoate reductase 1 (372 aa).

At Met-1 the chain carries N-acetylmethionine. Residues 31–33 (PLT), Ala-64, and Gln-106 each bind FMN. His-183 contributes to the substrate binding site. Tyr-188 acts as the Proton donor in catalysis. Arg-235 serves as a coordination point for FMN. A substrate-binding site is contributed by Arg-275. FMN contacts are provided by residues 303–305 (AGG) and 326–327 (GR).

It belongs to the NADH:flavin oxidoreductase/NADH oxidase family. FMN serves as cofactor. In terms of tissue distribution, mostly expressed in roots, also present in leaves, shoots and flowers. More abundant in cotyledons. In more details, expressed in peduncles, sepals, petals, around the abscission zone of siliques, maturing siliques and developing seeds.

The protein localises to the cytoplasm. It catalyses the reaction (1S,2S)-OPC-8 + NADP(+) = (9S,13S,15Z)-12-oxophyto-10,15-dienoate + NADPH + H(+). The protein operates within lipid metabolism; oxylipin biosynthesis. Specifically cleaves olefinic bonds in alpha,beta-unsaturated carbonyls and may be involved in detoxification or modification of these reactive compounds. May be involved in the biosynthesis or metabolism of oxylipin signaling molecules. In vitro, reduces 9R,13R-12-oxophytodienoic acid (9R,13R-OPDA) to 9R,13R-OPC-8:0, but only poorly 9S,13S-OPDA, the natural precursor of jasmonic acid. Can detoxify the explosive 2,4,6-trinitrotoluene (TNT) in vitro and in vivo by catalyzing its nitroreduction to form hydroxylamino-dinitrotoluene (HADNT). The polypeptide is 12-oxophytodienoate reductase 1 (Arabidopsis thaliana (Mouse-ear cress)).